A 578-amino-acid polypeptide reads, in one-letter code: Moesin/ezrin/radixin homolog 1 (578 aa).

An FERM domain is found at 1–296; sequence MSPKALNVRV…GNHELYMRRR (296 aa). Residues 463 to 555 form a disordered region; it reads ASTTPQHHHV…HRENVRQGRD (93 aa). Acidic residues predominate over residues 475 to 484; the sequence is DENENEEELT. Positions 492–555 are enriched in basic and acidic residues; sequence VSRDLDTDEH…HRENVRQGRD (64 aa). A Phosphothreonine modification is found at Thr559.

In terms of assembly, interacts with wgn. Interacts with Mer and arm at the adherens junction. Interacts with cytoskeletal actin at apical buds of microvilli in the precellularised embryo. Interacts with PCID2 (possibly via FERM domain). Phosphorylated on Thr-559. In the oocyte this phosphorylation is induced by phosphatidylinositol 4,5-bisphosphate (PtdIns[4,5]P(2)) generated by sktl.

It is found in the cell junction. The protein resides in the adherens junction. Its subcellular location is the cell projection. The protein localises to the microvillus. It localises to the rhabdomere. It is found in the cell membrane. The protein resides in the cytoplasm. Its subcellular location is the cytoskeleton. The protein localises to the cell cortex. It localises to the cilium. It is found in the flagellum. The protein resides in the nucleus. Its subcellular location is the nucleoplasm. The protein localises to the chromosome. Its function is as follows. Involved in connections of major cytoskeletal structures to the plasma membrane. Together with wgn, involved in control of axon targeting of R8 and R2-R5 photoreceptors, independent of egr. In the nucleus, recruited to sites of active transcription by RNA polymerase II where it has a role in nuclear mRNA export together with the mRNA export factor PCID2 and other messenger ribonucleoprotein (mRNP) particles. The chain is Moesin/ezrin/radixin homolog 1 (Moe) from Drosophila melanogaster (Fruit fly).